Consider the following 190-residue polypeptide: Potassium-transporting ATPase KdpC subunit (190 aa).

The chain crosses the membrane as a helical span at residues 10-30 (TFIFLLLITGGVYPLLTTVLG).

It belongs to the KdpC family. In terms of assembly, the system is composed of three essential subunits: KdpA, KdpB and KdpC.

The protein localises to the cell inner membrane. Functionally, part of the high-affinity ATP-driven potassium transport (or Kdp) system, which catalyzes the hydrolysis of ATP coupled with the electrogenic transport of potassium into the cytoplasm. This subunit acts as a catalytic chaperone that increases the ATP-binding affinity of the ATP-hydrolyzing subunit KdpB by the formation of a transient KdpB/KdpC/ATP ternary complex. The protein is Potassium-transporting ATPase KdpC subunit of Shigella dysenteriae serotype 1 (strain Sd197).